Reading from the N-terminus, the 583-residue chain is Mitogen-activated protein kinase 4 (583 aa).

A Protein kinase domain is found at 20–312 (FIDFQPLGFG…AEMGLQHPYM (293 aa)). Residues 26–34 (LGFGVNGLV) and Lys-49 contribute to the ATP site. Asp-149 acts as the Proton acceptor in catalysis. Ser-186 is subject to Phosphoserine; by PAK1, PAK2 and PAK3. Residues 186 to 188 (SEG) carry the SEG motif motif. An FRIEDE motif motif is present at residues 328 to 333 (FRIEDE). 2 stretches are compositionally biased toward basic and acidic residues: residues 366–379 (DRCQDASEVQRDPR) and 391–410 (VDPRKDSQSSSERFLEQSHS). A disordered region spans residues 366–410 (DRCQDASEVQRDPRAGSTPLAEDVQVDPRKDSQSSSERFLEQSHS). Ser-430 bears the Phosphoserine mark. The disordered stretch occupies residues 495–531 (STQSGSERASPPPDAPEPRLSASPPGHPTPIDGGASP).

This sequence belongs to the protein kinase superfamily. CMGC Ser/Thr protein kinase family. MAP kinase subfamily. Homodimer. Heterodimer with ERK3/MAPK6. Interacts with (via FRIEDE motif) MAPKAPK5. The cofactor is Mg(2+). In terms of processing, phosphorylated at Ser-186 by PAK1, PAK2 and PAK3 resulting in catalytic activation. Phosphorylated by MAPKAPK5 at other sites.

It is found in the cytoplasm. It localises to the nucleus. It catalyses the reaction L-seryl-[protein] + ATP = O-phospho-L-seryl-[protein] + ADP + H(+). The enzyme catalyses L-threonyl-[protein] + ATP = O-phospho-L-threonyl-[protein] + ADP + H(+). With respect to regulation, activated by phosphorylation at Ser-186. Atypical MAPK protein. Phosphorylates microtubule-associated protein 2 (MAP2) and MAPKAPK5. The precise role of the complex formed with MAPKAPK5 is still unclear, but the complex follows a complex set of phosphorylation events: upon interaction with atypical MAPKAPK5, ERK4/MAPK4 is phosphorylated at Ser-186 and then mediates phosphorylation and activation of MAPKAPK5, which in turn phosphorylates ERK4/MAPK4. May promote entry in the cell cycle. In Mus musculus (Mouse), this protein is Mitogen-activated protein kinase 4 (Mapk4).